We begin with the raw amino-acid sequence, 430 residues long: Delta-aminolevulinic acid dehydratase 1, chloroplastic (430 aa).

A chloroplast-targeting transit peptide spans 1–52 (MATTPIFNASCSFPSTRGIDCKSYIGLRSNVSKVSVASSRIATSQRRNLVVR). Over residues 82 to 91 (EAPPVPPKPA) the composition is skewed to pro residues. The disordered stretch occupies residues 82-101 (EAPPVPPKPAAPVGTPIIKP). Residue K298 is the Schiff-base intermediate with substrate of the active site. Residues R308 and K320 each contribute to the 5-aminolevulinate site. E336 is a binding site for Mg(2+). K351 functions as the Schiff-base intermediate with substrate in the catalytic mechanism. 2 residues coordinate 5-aminolevulinate: S377 and Y416.

Belongs to the ALAD family. As to quaternary structure, homooctamer. Mg(2+) serves as cofactor. In terms of tissue distribution, highly expressed in cotyledons during dark-to-light transition.

The protein resides in the plastid. The protein localises to the chloroplast. It catalyses the reaction 2 5-aminolevulinate = porphobilinogen + 2 H2O + H(+). It functions in the pathway porphyrin-containing compound metabolism; protoporphyrin-IX biosynthesis; coproporphyrinogen-III from 5-aminolevulinate: step 1/4. The protein operates within porphyrin-containing compound metabolism; chlorophyll biosynthesis. Functionally, catalyzes an early step in the biosynthesis of tetrapyrroles. Binds two molecules of 5-aminolevulinate per subunit, each at a distinct site, and catalyzes their condensation to form porphobilinogen. This Arabidopsis thaliana (Mouse-ear cress) protein is Delta-aminolevulinic acid dehydratase 1, chloroplastic (HEMB1).